The sequence spans 146 residues: Snaclec jerdonibitin subunit beta (146 aa).

Positions M1–A23 are cleaved as a signal peptide. Intrachain disulfides connect C25–C36, C53–C142, and C119–C134. Residues Y32 to K143 form the C-type lectin domain.

The protein belongs to the snaclec family. In terms of assembly, heterodimer of subunits alpha and beta; disulfide-linked. As to expression, expressed by the venom gland.

It is found in the secreted. Functionally, snaclec that dose-dependently inhibits platelet aggregation induced by ristocetin or low-dose thrombin, but not by high-dose thrombin. Binds to GPIbalpha (GP1BA). In vivo, also dose-dependently induces thrombocytopenia of mice and platelet counts remains at very low level even after 18 hours intravenous injection. The protein is Snaclec jerdonibitin subunit beta of Protobothrops jerdonii (Jerdon's pitviper).